The chain runs to 424 residues: Glutamate-1-semialdehyde 2,1-aminomutase (424 aa).

Lys-260 bears the N6-(pyridoxal phosphate)lysine mark.

The protein belongs to the class-III pyridoxal-phosphate-dependent aminotransferase family. HemL subfamily. Pyridoxal 5'-phosphate is required as a cofactor.

The protein resides in the cytoplasm. The enzyme catalyses (S)-4-amino-5-oxopentanoate = 5-aminolevulinate. The protein operates within porphyrin-containing compound metabolism; protoporphyrin-IX biosynthesis; 5-aminolevulinate from L-glutamyl-tRNA(Glu): step 2/2. The chain is Glutamate-1-semialdehyde 2,1-aminomutase from Nitrosopumilus maritimus (strain SCM1).